The sequence spans 308 residues: Cytochrome b (308 aa).

Helical transmembrane passes span 1-21 (FGSLLGICLATQIITGLLMAM), 45-66 (WLIRNLHANGASMFFICIYLHI), 81-101 (WNTGVILLLTLMATAFVGYVL), and 146-166 (FFALHFLLPFIITGLTLVHLT). Heme b contacts are provided by H51 and H65. 2 residues coordinate heme b: H150 and H164. An a ubiquinone-binding site is contributed by H169. The next 3 helical transmembrane spans lie at 194-214 (IKDILGFMAMLLPLMSLAMFS), 256-276 (LGGVLALAASVLILFLIPFLH), and 288-308 (LSQLMFWILVANLLILTWVGS).

Belongs to the cytochrome b family. The cytochrome bc1 complex contains 11 subunits: 3 respiratory subunits (MT-CYB, CYC1 and UQCRFS1), 2 core proteins (UQCRC1 and UQCRC2) and 6 low-molecular weight proteins (UQCRH/QCR6, UQCRB/QCR7, UQCRQ/QCR8, UQCR10/QCR9, UQCR11/QCR10 and a cleavage product of UQCRFS1). This cytochrome bc1 complex then forms a dimer. The cofactor is heme b.

It is found in the mitochondrion inner membrane. In terms of biological role, component of the ubiquinol-cytochrome c reductase complex (complex III or cytochrome b-c1 complex) that is part of the mitochondrial respiratory chain. The b-c1 complex mediates electron transfer from ubiquinol to cytochrome c. Contributes to the generation of a proton gradient across the mitochondrial membrane that is then used for ATP synthesis. The sequence is that of Cytochrome b (MT-CYB) from Scytalopus magellanicus (Magellanic tapaculo).